A 234-amino-acid chain; its full sequence is Proteasome subunit alpha (234 aa).

The protein belongs to the peptidase T1A family. As to quaternary structure, the 20S proteasome core is composed of 14 alpha and 14 beta subunits that assemble into four stacked heptameric rings, resulting in a barrel-shaped structure. The two inner rings, each composed of seven catalytic beta subunits, are sandwiched by two outer rings, each composed of seven alpha subunits. The catalytic chamber with the active sites is on the inside of the barrel. Has a gated structure, the ends of the cylinder being occluded by the N-termini of the alpha-subunits. Is capped by the proteasome-associated ATPase, ARC.

It is found in the cytoplasm. It participates in protein degradation; proteasomal Pup-dependent pathway. The formation of the proteasomal ATPase ARC-20S proteasome complex, likely via the docking of the C-termini of ARC into the intersubunit pockets in the alpha-rings, may trigger opening of the gate for substrate entry. Interconversion between the open-gate and close-gate conformations leads to a dynamic regulation of the 20S proteasome proteolysis activity. In terms of biological role, component of the proteasome core, a large protease complex with broad specificity involved in protein degradation. This Acidothermus cellulolyticus (strain ATCC 43068 / DSM 8971 / 11B) protein is Proteasome subunit alpha.